Consider the following 440-residue polypeptide: Glutamate-1-semialdehyde 2,1-aminomutase (440 aa).

Lys271 is modified (N6-(pyridoxal phosphate)lysine).

The protein belongs to the class-III pyridoxal-phosphate-dependent aminotransferase family. HemL subfamily. Homodimer. Pyridoxal 5'-phosphate serves as cofactor.

Its subcellular location is the cytoplasm. It carries out the reaction (S)-4-amino-5-oxopentanoate = 5-aminolevulinate. The protein operates within porphyrin-containing compound metabolism; protoporphyrin-IX biosynthesis; 5-aminolevulinate from L-glutamyl-tRNA(Glu): step 2/2. This chain is Glutamate-1-semialdehyde 2,1-aminomutase, found in Chlamydia pneumoniae (Chlamydophila pneumoniae).